The sequence spans 40 residues: Bacterioferritin heavy chain (40 aa).

One can recognise a Ferritin-like diiron domain in the interval 1-40 (MRGNPEVIDYLNMLIGGELAARDQYLIHSRMYEDWGLTKY). Glu-18 lines the Fe cation pocket.

The protein belongs to the bacterioferritin family. In terms of assembly, oligomer consisting of two types of subunits: light chain and heavy chain.

Functionally, may perform analogous functions in iron detoxification and storage to that of animal ferritins. Contains approximately 750 iron atoms per molecule. In Absidia spinosa, this protein is Bacterioferritin heavy chain.